A 474-amino-acid polypeptide reads, in one-letter code: Siroheme synthase (474 aa).

The tract at residues 1–203 is precorrin-2 dehydrogenase /sirohydrochlorin ferrochelatase; sequence MDYLPIFLKL…GRAEDAERVL (203 aa). Residues 22-23 and 43-44 contribute to the NAD(+) site; these read EV and AS. The segment at 219–474 is uroporphyrinogen-III C-methyltransferase; that stretch reads GSVALVGAGP…QETEGRSGNG (256 aa). Pro-228 is a binding site for S-adenosyl-L-methionine. Asp-251 (proton acceptor) is an active-site residue. Lys-273 (proton donor) is an active-site residue. S-adenosyl-L-methionine is bound by residues 304 to 306, Ile-309, 334 to 335, Met-387, and Gly-416; these read GGD and TA.

This sequence in the N-terminal section; belongs to the precorrin-2 dehydrogenase / sirohydrochlorin ferrochelatase family. In the C-terminal section; belongs to the precorrin methyltransferase family.

It carries out the reaction uroporphyrinogen III + 2 S-adenosyl-L-methionine = precorrin-2 + 2 S-adenosyl-L-homocysteine + H(+). The catalysed reaction is precorrin-2 + NAD(+) = sirohydrochlorin + NADH + 2 H(+). It catalyses the reaction siroheme + 2 H(+) = sirohydrochlorin + Fe(2+). It participates in cofactor biosynthesis; adenosylcobalamin biosynthesis; precorrin-2 from uroporphyrinogen III: step 1/1. It functions in the pathway cofactor biosynthesis; adenosylcobalamin biosynthesis; sirohydrochlorin from precorrin-2: step 1/1. The protein operates within porphyrin-containing compound metabolism; siroheme biosynthesis; precorrin-2 from uroporphyrinogen III: step 1/1. Its pathway is porphyrin-containing compound metabolism; siroheme biosynthesis; siroheme from sirohydrochlorin: step 1/1. It participates in porphyrin-containing compound metabolism; siroheme biosynthesis; sirohydrochlorin from precorrin-2: step 1/1. Functionally, multifunctional enzyme that catalyzes the SAM-dependent methylations of uroporphyrinogen III at position C-2 and C-7 to form precorrin-2 via precorrin-1. Then it catalyzes the NAD-dependent ring dehydrogenation of precorrin-2 to yield sirohydrochlorin. Finally, it catalyzes the ferrochelation of sirohydrochlorin to yield siroheme. This chain is Siroheme synthase, found in Methylococcus capsulatus (strain ATCC 33009 / NCIMB 11132 / Bath).